A 160-amino-acid polypeptide reads, in one-letter code: Nucleotide-binding protein CJA_2652 (160 aa).

It belongs to the YajQ family.

Its function is as follows. Nucleotide-binding protein. In Cellvibrio japonicus (strain Ueda107) (Pseudomonas fluorescens subsp. cellulosa), this protein is Nucleotide-binding protein CJA_2652.